The chain runs to 520 residues: DNA mismatch repair protein MutL (520 aa).

Belongs to the DNA mismatch repair MutL/HexB family.

Its function is as follows. This protein is involved in the repair of mismatches in DNA. It is required for dam-dependent methyl-directed DNA mismatch repair. May act as a 'molecular matchmaker', a protein that promotes the formation of a stable complex between two or more DNA-binding proteins in an ATP-dependent manner without itself being part of a final effector complex. The protein is DNA mismatch repair protein MutL of Persephonella marina (strain DSM 14350 / EX-H1).